Consider the following 161-residue polypeptide: MPYTVTSPSQLVYFGSVWADPITFIDLCTVALGNQFQTQNARTTVQQQFSDLFKTVPTRTNRFNDGENGFRVFRYNSTLDPLISALMNSFDTRNRIIEVDNPANPNTSEVASATQRVDDATVNIRACINNLMNELVRGTGMMNTASFETVSNLTWTTTTTT.

The protein belongs to the virgaviridae capsid protein family.

The protein localises to the virion. In terms of biological role, capsid protein self-assembles to form rod-shaped virions about 18 nm in diameter with a central canal enclosing the viral genomic RNA. This Tobamovirus Ob protein is Capsid protein (CP).